The primary structure comprises 916 residues: Translation initiation factor IF-2 (916 aa).

The span at 151-191 (NLDEQQRLAESDRARDEAIQRKRDEEQAAKDRVEAERKAAE) shows a compositional bias: basic and acidic residues. Disordered stretches follow at residues 151 to 262 (NLDE…SHVM) and 280 to 328 (HLSA…ERPT). Low complexity-rich tracts occupy residues 192–243 (EAAA…ATPA) and 293–305 (RGKP…SSSS). The 170-residue stretch at 415 to 584 (SRPPVVTIMG…SLQAEVLELK (170 aa)) folds into the tr-type G domain. The tract at residues 424–431 (GHVDHGKT) is G1. 424–431 (GHVDHGKT) lines the GTP pocket. Residues 449-453 (GITQH) are G2. The interval 470 to 473 (DTPG) is G3. GTP-binding positions include 470 to 474 (DTPGH) and 524 to 527 (NKID). The interval 524–527 (NKID) is G4. The tract at residues 560–562 (SAK) is G5.

It belongs to the TRAFAC class translation factor GTPase superfamily. Classic translation factor GTPase family. IF-2 subfamily.

The protein resides in the cytoplasm. One of the essential components for the initiation of protein synthesis. Protects formylmethionyl-tRNA from spontaneous hydrolysis and promotes its binding to the 30S ribosomal subunits. Also involved in the hydrolysis of GTP during the formation of the 70S ribosomal complex. This is Translation initiation factor IF-2 from Xanthomonas campestris pv. campestris (strain ATCC 33913 / DSM 3586 / NCPPB 528 / LMG 568 / P 25).